A 90-amino-acid polypeptide reads, in one-letter code: Protein LURE 1.5 (90 aa).

An N-terminal signal peptide occupies residues 1–19 (MKLPIIFLTLLIFVSSCTS). 2 cysteine pairs are disulfide-bonded: Cys-58–Cys-75 and Cys-61–Cys-82.

Belongs to the DEFL family. Expressed in the pistil. Detected exclusively in the synergid cells.

It is found in the secreted. In terms of biological role, inactive pollen tube attractants guiding pollen tubes to the ovular micropyle. The sequence is that of Protein LURE 1.5 from Arabidopsis thaliana (Mouse-ear cress).